Reading from the N-terminus, the 638-residue chain is Threonine--tRNA ligase (638 aa).

The 61-residue stretch at 1–61 (MVAITLPDGK…DRDVNLSIIT (61 aa)) folds into the TGS domain. A catalytic region spans residues 244–536 (DHRRLGREME…LIENFAGRFP (293 aa)). Residues Cys-336, His-387, and His-513 each coordinate Zn(2+).

The protein belongs to the class-II aminoacyl-tRNA synthetase family. Homodimer. Requires Zn(2+) as cofactor.

The protein resides in the cytoplasm. It catalyses the reaction tRNA(Thr) + L-threonine + ATP = L-threonyl-tRNA(Thr) + AMP + diphosphate + H(+). In terms of biological role, catalyzes the attachment of threonine to tRNA(Thr) in a two-step reaction: L-threonine is first activated by ATP to form Thr-AMP and then transferred to the acceptor end of tRNA(Thr). Also edits incorrectly charged L-seryl-tRNA(Thr). This chain is Threonine--tRNA ligase, found in Paramagnetospirillum magneticum (strain ATCC 700264 / AMB-1) (Magnetospirillum magneticum).